Here is a 439-residue protein sequence, read N- to C-terminus: Xylose isomerase (439 aa).

Residues H101 and D104 contribute to the active site. 7 residues coordinate Mg(2+): E232, E268, H271, D296, D307, D309, and D339.

Belongs to the xylose isomerase family. In terms of assembly, homotetramer. It depends on Mg(2+) as a cofactor.

It localises to the cytoplasm. The enzyme catalyses alpha-D-xylose = alpha-D-xylulofuranose. The chain is Xylose isomerase (xylA) from Lactococcus lactis subsp. lactis (strain IL1403) (Streptococcus lactis).